A 328-amino-acid chain; its full sequence is MFIIKSMLYRLMQMIVVLFVISTLTFILMKLSPGNPVDKILHLDVAQVSTEQINATKDKLGLNDSLLVQWWHWMNHLLHFNLGKSFESKEPVTQILFNYAPITLLISFSTLVVSLCISIPLGIIAAKRFHKWTDKVIRVISTLSISLPAFFIGIILLFIVTNLMNIDSVILSQFILPVITLSLGMCAYIIRLVRSNLLMLLQSNIVQASRLRGMNERYILIHDLLKPTILPIIPLLGISLGSLIGGTVVIENLFDIPGIGYLLMDSIKSRDYPVIQGCVLFIGFFVVIINTIADLLTLLLDPKQRLQLGNPKNKTNTPLISESSDRHA.

6 helical membrane passes run 11–31, 104–124, 139–159, 170–190, 229–249, and 279–299; these read LMQMIVVLFVISTLTFILMKL, LLISFSTLVVSLCISIPLGII, VISTLSISLPAFFIGIILLFI, ILSQFILPVITLSLGMCAYII, ILPIIPLLGISLGSLIGGTVV, and VLFIGFFVVIINTIADLLTLL. An ABC transmembrane type-1 domain is found at 100–297; that stretch reads APITLLISFS…IINTIADLLT (198 aa).

It belongs to the binding-protein-dependent transport system permease family. OppBC subfamily. As to quaternary structure, the complex is composed of two ATP-binding proteins (NikD and NikE), two transmembrane proteins (NikB and NikC) and a solute-binding protein (NikA).

The protein resides in the cell membrane. Its function is as follows. Part of the ABC transporter complex NikABCDE (Opp2) involved in nickel import. Probably responsible for the translocation of the substrate across the membrane. The polypeptide is Nickel import system permease protein NikB (Staphylococcus aureus (strain Mu50 / ATCC 700699)).